Consider the following 1484-residue polypeptide: Chromosome partition protein MukB (1484 aa).

34-41 contacts ATP; the sequence is GGNGAGKS. Coiled coils occupy residues 338 to 415, 496 to 604, 781 to 805, 835 to 868, 903 to 1115, and 1206 to 1265; these read NLVQ…RAIQ, QTAR…ALAW, AARE…ATLS, EAEM…HYDQ, HDAQ…SAKA, and DDPV…LQAV. Residues 666 to 783 are flexible hinge; sequence PGGTDDARLT…AVPLFGRAAR (118 aa).

Belongs to the SMC family. MukB subfamily. As to quaternary structure, homodimerization via its hinge domain. Binds to DNA via its C-terminal region. Interacts, and probably forms a ternary complex, with MukE and MukF via its C-terminal region. The complex formation is stimulated by calcium or magnesium. Interacts with tubulin-related protein FtsZ.

It localises to the cytoplasm. Its subcellular location is the nucleoid. Functionally, plays a central role in chromosome condensation, segregation and cell cycle progression. Functions as a homodimer, which is essential for chromosome partition. Involved in negative DNA supercoiling in vivo, and by this means organize and compact chromosomes. May achieve or facilitate chromosome segregation by condensation DNA from both sides of a centrally located replisome during cell division. This chain is Chromosome partition protein MukB, found in Sodalis glossinidius (strain morsitans).